The chain runs to 499 residues: Flotillin-like protein 2 (499 aa).

Cys37 is lipidated: S-palmitoyl cysteine. Residues 243-319 (LREEAKVKAE…LRLTEKLKAE (77 aa)) are a coiled coil.

This sequence belongs to the band 7/mec-2 family. Flotillin subfamily. May be palmitoylated.

The protein localises to the cell membrane. Its subcellular location is the membrane. The protein resides in the caveola. Functionally, may act as a scaffolding protein within caveolar membranes, functionally participating in formation of caveolae or caveolae-like vesicles. The protein is Flotillin-like protein 2 (FLOT2) of Oryza sativa subsp. japonica (Rice).